The primary structure comprises 322 residues: uncharacterized protein (322 aa).

2 stretches are compositionally biased toward basic residues: residues 1–16 and 43–61; these read MPGNSRRRGAVRKSGT and LRPHHPAAKRARAQPRRPV. The tract at residues 1–69 is disordered; it reads MPGNSRRRGA…PVKRADETET (69 aa). S-adenosyl-L-methionine is bound by residues G261, I281, and L290.

The protein belongs to the class IV-like SAM-binding methyltransferase superfamily. RNA methyltransferase TrmH family.

This is an uncharacterized protein from Mycobacterium bovis (strain ATCC BAA-935 / AF2122/97).